Consider the following 21-residue polypeptide: QFPTDYDEGEDDRPKSGLGAR.

Q1 carries the post-translational modification Pyrrolidone carboxylic acid. The span at Q1–D11 shows a compositional bias: acidic residues. The interval Q1–R21 is disordered. An O-linked (GalNAc...) threonine glycan is attached at T4. Y6 carries the sulfotyrosine modification.

As to quaternary structure, heterohexamer; disulfide linked. Contains 2 sets of 3 non-identical chains (alpha, beta and gamma). The 2 heterotrimers are in head to head conformation with the N-termini in a small central domain. In terms of processing, conversion of fibrinogen to fibrin is triggered by thrombin, which cleaves fibrinopeptides A and B from alpha and beta chains, and thus exposes the N-terminal polymerization sites responsible for the formation of the soft clot.

The protein resides in the secreted. In terms of biological role, cleaved by the protease thrombin to yield monomers which, together with fibrinogen alpha (FGA) and fibrinogen gamma (FGG), polymerize to form an insoluble fibrin matrix. Fibrin has a major function in hemostasis as one of the primary components of blood clots. In addition, functions during the early stages of wound repair to stabilize the lesion and guide cell migration during re-epithelialization. Was originally thought to be essential for platelet aggregation, based on in vitro studies using anticoagulated blood. However subsequent studies have shown that it is not absolutely required for thrombus formation in vivo. Enhances expression of SELP in activated platelets. Maternal fibrinogen is essential for successful pregnancy. Fibrin deposition is also associated with infection, where it protects against IFNG-mediated hemorrhage. May also facilitate the antibacterial immune response via both innate and T-cell mediated pathways. The protein is Fibrinogen beta chain (FGB) of Syncerus caffer (African buffalo).